Reading from the N-terminus, the 348-residue chain is Isopentenyl-diphosphate delta-isomerase (348 aa).

Position 11 to 12 (11 to 12 (RK)) interacts with substrate. Residues 70–72 (AMT), Ser100, and Asn131 contribute to the FMN site. 100–102 (SQR) contacts substrate. Gln165 is a binding site for substrate. Glu166 serves as a coordination point for Mg(2+). Residues Lys197, Thr231, 278–280 (GIR), and 299–300 (AR) each bind FMN.

It belongs to the IPP isomerase type 2 family. As to quaternary structure, homooctamer. Dimer of tetramers. FMN serves as cofactor. The cofactor is NADPH. It depends on Mg(2+) as a cofactor.

Its subcellular location is the cytoplasm. The enzyme catalyses isopentenyl diphosphate = dimethylallyl diphosphate. Involved in the biosynthesis of isoprenoids. Catalyzes the 1,3-allylic rearrangement of the homoallylic substrate isopentenyl (IPP) to its allylic isomer, dimethylallyl diphosphate (DMAPP). The protein is Isopentenyl-diphosphate delta-isomerase of Mycobacterium marinum (strain ATCC BAA-535 / M).